Here is a 214-residue protein sequence, read N- to C-terminus: MSVTQRHAEELLQGARELGIELSERQQEQLLAYLGLLIKWNKAYNLTAVRDPDEMVSRHLLDSLSVVPFVAERGDNWLDVGSGGGMPGIPLAIMFPERRFTLLDSNGKKTRFLVQVKLELKLANLEVVHSRVETYRPEQPFDGISSRAFSSLQDFSDWTRHLGSADTHWLAMKGLHPGDELQALPADFRLDATHVLRVPGCQGQRHLLILRRSV.

Residues G81, M86, 132–133, and R147 each bind S-adenosyl-L-methionine; that span reads VE.

It belongs to the methyltransferase superfamily. RNA methyltransferase RsmG family.

The protein resides in the cytoplasm. The enzyme catalyses guanosine(527) in 16S rRNA + S-adenosyl-L-methionine = N(7)-methylguanosine(527) in 16S rRNA + S-adenosyl-L-homocysteine. Functionally, specifically methylates the N7 position of guanine in position 527 of 16S rRNA. The protein is Ribosomal RNA small subunit methyltransferase G of Ectopseudomonas mendocina (strain ymp) (Pseudomonas mendocina).